Here is a 437-residue protein sequence, read N- to C-terminus: tRNA wybutosine-synthesizing protein 2 homolog (437 aa).

S-adenosyl-L-methionine is bound by residues S208, K215, E255, and 283-284; that span reads DN. Residues 331–344 show a composition bias toward polar residues; it reads SFSGKNPQPPGSSN. The tract at residues 331–374 is disordered; sequence SFSGKNPQPPGSSNMEKKHWPHPQKITTDKQGNRTTGSCMGEMS.

It belongs to the class I-like SAM-binding methyltransferase superfamily. TRM5/TYW2 family.

It carries out the reaction 4-demethylwyosine(37) in tRNA(Phe) + S-adenosyl-L-methionine = 4-demethyl-7-[(3S)-3-amino-3-carboxypropyl]wyosine(37) in tRNA(Phe) + S-methyl-5'-thioadenosine + H(+). Its pathway is tRNA modification; wybutosine-tRNA(Phe) biosynthesis. Its function is as follows. S-adenosyl-L-methionine-dependent transferase that acts as a component of the wybutosine biosynthesis pathway. Wybutosine is a hyper modified guanosine with a tricyclic base found at the 3'-position adjacent to the anticodon of eukaryotic phenylalanine tRNA. Catalyzes the transfer of the alpha-amino-alpha-carboxypropyl (acp) group from S-adenosyl-L-methionine to the C-7 position of 4-demethylwyosine (imG-14) to produce wybutosine-86. The polypeptide is tRNA wybutosine-synthesizing protein 2 homolog (Trmt12) (Rattus norvegicus (Rat)).